Reading from the N-terminus, the 204-residue chain is MKLSGHGLRCVRGGREVFSGLDVAAESGRAVAITGPNGAGKTSLLRLLAGLLALEGGSIGLEGGDPELTLPEQAHYLGHRDALKPALSVSENLSFWRGFLGGASRASGPDAAQALAAVGLDHVAHLPAAYLSAGQRRRLSIARLLAVKRPVWLLDEPTSALDVAGQSAFAAIMTGHLAGGGIILAATHTPLGIAARELRIGGTT.

The ABC transporter domain maps to 3-204 (LSGHGLRCVR…ARELRIGGTT (202 aa)). 35–42 (GPNGAGKT) is a binding site for ATP.

Belongs to the ABC transporter superfamily. CcmA exporter (TC 3.A.1.107) family. The complex is composed of two ATP-binding proteins (CcmA) and two transmembrane proteins (CcmB).

It is found in the cell inner membrane. It carries out the reaction heme b(in) + ATP + H2O = heme b(out) + ADP + phosphate + H(+). In terms of biological role, part of the ABC transporter complex CcmAB involved in the biogenesis of c-type cytochromes; once thought to export heme, this seems not to be the case, but its exact role is uncertain. Responsible for energy coupling to the transport system. The chain is Cytochrome c biogenesis ATP-binding export protein CcmA from Nitrobacter hamburgensis (strain DSM 10229 / NCIMB 13809 / X14).